A 215-amino-acid chain; its full sequence is Proteasome subunit beta type-1 (215 aa).

M1 is subject to N-acetylmethionine. The propeptide at 1 to 19 is removed in mature form; sequence MNGIQVDINRLKKGEVSLG. T20 acts as the Nucleophile in catalysis.

The protein belongs to the peptidase T1B family. In terms of assembly, the 26S proteasome consists of a 20S proteasome core and two 19S regulatory subunits. The 20S proteasome core is composed of 28 subunits that are arranged in four stacked rings, resulting in a barrel-shaped structure. The two end rings are each formed by seven alpha subunits, and the two central rings are each formed by seven beta subunits. The catalytic chamber with the active sites is on the inside of the barrel.

It localises to the cytoplasm. The protein resides in the nucleus. It catalyses the reaction Cleavage of peptide bonds with very broad specificity.. Its function is as follows. The proteasome degrades poly-ubiquitinated proteins in the cytoplasm and in the nucleus. It is essential for the regulated turnover of proteins and for the removal of misfolded proteins. The proteasome is a multicatalytic proteinase complex that is characterized by its ability to cleave peptides with Arg, Phe, Tyr, Leu, and Glu adjacent to the leaving group at neutral or slightly basic pH. It has an ATP-dependent proteolytic activity. PRE3 and PRE4 are necessary for the peptidyl-glutamyl-peptide-hydrolyzing activity. In terms of biological role, this subunit is necessary for the peptidylglutamyl-peptide hydrolyzing activity. The sequence is that of Proteasome subunit beta type-1 (PRE3) from Saccharomyces cerevisiae (strain ATCC 204508 / S288c) (Baker's yeast).